Consider the following 92-residue polypeptide: Small ribosomal subunit protein uS19c (92 aa).

It belongs to the universal ribosomal protein uS19 family.

It is found in the plastid. Its subcellular location is the chloroplast. In terms of biological role, protein S19 forms a complex with S13 that binds strongly to the 16S ribosomal RNA. The protein is Small ribosomal subunit protein uS19c of Platanus occidentalis (Sycamore).